Reading from the N-terminus, the 503-residue chain is Exonuclease V, mitochondrial (503 aa).

Residues Cys-92, Cys-467, Cys-470, and Cys-476 each contribute to the [4Fe-4S] cluster site.

The protein belongs to the EXO5 family. Monomer. Mg(2+) is required as a cofactor. [4Fe-4S] cluster serves as cofactor.

Its subcellular location is the mitochondrion. Functionally, single strand DNA specific 5' exonuclease involved in mitochondrial DNA replication and recombination. Releases dinucleotides as main products of catalysis. Has the capacity to slide across 5'double-stranded DNA or 5'RNA sequences and resumes cutting two nucleotides downstream of the double-stranded-to-single-stranded junction or RNA-to-DNA junction, respectively. In Candida glabrata (strain ATCC 2001 / BCRC 20586 / JCM 3761 / NBRC 0622 / NRRL Y-65 / CBS 138) (Yeast), this protein is Exonuclease V, mitochondrial (EXO5).